Here is a 361-residue protein sequence, read N- to C-terminus: Chorismate synthase (361 aa).

Positions 48 and 54 each coordinate NADP(+). FMN is bound by residues 131 to 133 (RSS), 243 to 244 (NA), Gly-287, 302 to 306 (KPTSS), and Arg-328.

This sequence belongs to the chorismate synthase family. In terms of assembly, homotetramer. It depends on FMNH2 as a cofactor.

The enzyme catalyses 5-O-(1-carboxyvinyl)-3-phosphoshikimate = chorismate + phosphate. It functions in the pathway metabolic intermediate biosynthesis; chorismate biosynthesis; chorismate from D-erythrose 4-phosphate and phosphoenolpyruvate: step 7/7. In terms of biological role, catalyzes the anti-1,4-elimination of the C-3 phosphate and the C-6 proR hydrogen from 5-enolpyruvylshikimate-3-phosphate (EPSP) to yield chorismate, which is the branch point compound that serves as the starting substrate for the three terminal pathways of aromatic amino acid biosynthesis. This reaction introduces a second double bond into the aromatic ring system. The sequence is that of Chorismate synthase from Rhodopseudomonas palustris (strain BisB5).